The primary structure comprises 170 residues: Neurotensin/neuromedin N (170 aa).

A signal peptide spans 1-23 (MMAGMKIQLVCMILLAFSSWSLC).

It belongs to the neurotensin family. In terms of assembly, interacts with NTSR1. Interacts with SORT1. Interacts with SORL1. Post-translationally, neurotensin is cleaved and degraded by Angiotensin-converting enzyme (ACE) and neprilysin (MME). In terms of tissue distribution, brain and gut.

The protein resides in the secreted. It is found in the cytoplasmic vesicle. The protein localises to the secretory vesicle. In terms of biological role, neurotensin may play an endocrine or paracrine role in the regulation of fat metabolism. It causes contraction of smooth muscle. This chain is Neurotensin/neuromedin N (NTS), found in Bos taurus (Bovine).